The chain runs to 134 residues: Profilin-3 (134 aa).

A disulfide bridge links C13 with C118. Positions 84–100 (AVIRGKKGSGGITIKKT) match the Involved in PIP2 interaction motif. T114 bears the Phosphothreonine mark.

Belongs to the profilin family. As to quaternary structure, occurs in many kinds of cells as a complex with monomeric actin in a 1:1 ratio. Post-translationally, phosphorylated by MAP kinases.

It is found in the cytoplasm. It localises to the cytoskeleton. Its function is as follows. Binds to actin and affects the structure of the cytoskeleton. At high concentrations, profilin prevents the polymerization of actin, whereas it enhances it at low concentrations. The protein is Profilin-3 of Olea europaea (Common olive).